The primary structure comprises 292 residues: Glycine-rich RNA-binding protein RZ1B (292 aa).

Positions 12 to 90 (SRIFVGGLSW…KVISVNKAEP (79 aa)) constitute an RRM domain. Phosphoserine is present on Ser20. The segment at 93-114 (GGEDVDQLKKGGGYSSRGKGTE) is disordered. Residues 117–132 (CFKCRRPGHWARDCPS) form a CCHC-type zinc finger. Composition is skewed to basic and acidic residues over residues 180-210 (DGRR…HYPF) and 220-268 (FVSD…EGRP). Residues 180-292 (DGRRDRDGGR…GGRPSSYERW (113 aa)) are disordered.

In terms of tissue distribution, expressed in roots, rosette and cauline leaves, stems, floral buds and flowers.

Its subcellular location is the nucleus. Functionally, binds RNA and DNA sequences non-specifically. May be involved in tolerance to cold stress. This chain is Glycine-rich RNA-binding protein RZ1B, found in Arabidopsis thaliana (Mouse-ear cress).